Reading from the N-terminus, the 459-residue chain is RuvB-like helicase 1 (459 aa).

75-82 (GGPSTGKT) contacts ATP.

This sequence belongs to the RuvB family. May form heterododecamers with RVB2. Component of the SWR1 chromatin remodeling complex, the INO80 chromatin remodeling complex, and of the R2TP complex.

The protein localises to the nucleus. The catalysed reaction is ATP + H2O = ADP + phosphate + H(+). DNA helicase which participates in several chromatin remodeling complexes, including the SWR1 and the INO80 complexes. The SWR1 complex mediates the ATP-dependent exchange of histone H2A for the H2A variant HZT1 leading to transcriptional regulation of selected genes by chromatin remodeling. The INO80 complex remodels chromatin by shifting nucleosomes and is involved in DNA repair. Also involved in pre-rRNA processing. The protein is RuvB-like helicase 1 (RVB1) of Eremothecium gossypii (strain ATCC 10895 / CBS 109.51 / FGSC 9923 / NRRL Y-1056) (Yeast).